The chain runs to 169 residues: SsrA-binding protein (169 aa).

Belongs to the SmpB family.

Its subcellular location is the cytoplasm. In terms of biological role, required for rescue of stalled ribosomes mediated by trans-translation. Binds to transfer-messenger RNA (tmRNA), required for stable association of tmRNA with ribosomes. tmRNA and SmpB together mimic tRNA shape, replacing the anticodon stem-loop with SmpB. tmRNA is encoded by the ssrA gene; the 2 termini fold to resemble tRNA(Ala) and it encodes a 'tag peptide', a short internal open reading frame. During trans-translation Ala-aminoacylated tmRNA acts like a tRNA, entering the A-site of stalled ribosomes, displacing the stalled mRNA. The ribosome then switches to translate the ORF on the tmRNA; the nascent peptide is terminated with the 'tag peptide' encoded by the tmRNA and targeted for degradation. The ribosome is freed to recommence translation, which seems to be the essential function of trans-translation. The chain is SsrA-binding protein from Mycolicibacterium paratuberculosis (strain ATCC BAA-968 / K-10) (Mycobacterium paratuberculosis).